A 977-amino-acid chain; its full sequence is Zinc finger CCCH domain-containing protein 7B (977 aa).

TPR repeat units follow at residues 1 to 27 (MERQ…KQEE), 36 to 69 (VQNL…ADYA), and 82 to 115 (CKLH…DSES). Serine 217 carries the phosphoserine modification. The LD motif; interaction with NSP3 motif lies at 248–256 (STDSLDDFS). A phosphoserine mark is found at serine 364 and serine 367. The segment at 365–403 (FGSTRGSLDKPDSFMEETNSQDHRPPSGAQKPAPSPEPC) is disordered. 3 C3H1-type zinc fingers span residues 484 to 508 (LCKD…HQEE), 616 to 638 (VCRH…HSFI), and 754 to 782 (PQQY…HSPE). The C2H2-type zinc finger occupies 842–866 (YHCWLCGKNSNSKKQWQQHIQSEKH). The C3H1-type 4 zinc-finger motif lies at 886 to 914 (MGEFRLCDRLQKGKACPDGDKCRCAHGQE).

In terms of assembly, (Microbial infection) Interacts (via LD motif) with rotavirus A NSP3 (via the coiled-coil region).

The protein resides in the nucleus. Functionally, may be a specific regulator of miRNA biogenesis. Binds to microRNAs MIR7-1, MIR16-2 and MIR29A hairpins recognizing the 'ATA(A/T)' motif in the apical loop. This is Zinc finger CCCH domain-containing protein 7B (ZC3H7B) from Homo sapiens (Human).